Consider the following 304-residue polypeptide: N-acetyl-D-glucosamine kinase (304 aa).

ATP is bound by residues 4–11 and 133–140; these read GFDIGGTK and GFGGGLIF. Zn(2+)-binding residues include His157, Cys178, Cys180, and Cys185.

This sequence belongs to the ROK (NagC/XylR) family. NagK subfamily.

The enzyme catalyses N-acetyl-D-glucosamine + ATP = N-acetyl-D-glucosamine 6-phosphate + ADP + H(+). It functions in the pathway cell wall biogenesis; peptidoglycan recycling. In terms of biological role, catalyzes the phosphorylation of N-acetyl-D-glucosamine (GlcNAc) derived from cell-wall degradation, yielding GlcNAc-6-P. In Pasteurella multocida (strain Pm70), this protein is N-acetyl-D-glucosamine kinase.